The sequence spans 1370 residues: Putative Polycomb group protein ASXL2 (1370 aa).

The HTH HARE-type domain maps to 11–86; the sequence is RTWAEAAKTV…RMGVYTLKKD (76 aa). A disordered region spans residues 92–216; the sequence is KELSECSEES…DSVPAKPGQM (125 aa). Over residues 103–120 the composition is skewed to low complexity; it reads DGQSDSHSSDNSSSSDGG. Over residues 141–152 the composition is skewed to pro residues; that stretch reads PPSPPSGCPSPT. At Ser150 the chain carries Phosphoserine. The short motif at 178 to 182 is the Nuclear localization signal element; it reads QQKKK. Residues 186–198 show a composition bias toward polar residues; the sequence is CRPSMSISNQHLS. The DEUBAD domain occupies 229-338; it reads PDSILVNTNL…FENYYGQSSG (110 aa). Positions 258-262 match the LXXLL motif motif; it reads LLLLL. 2 disordered regions span residues 340 to 487 and 516 to 535; these read SLED…AGLQ and QESL…SSWE. Residues 398-412 show a composition bias toward basic and acidic residues; it reads QKEENQDEARPDSKS. Residues Ser477, Ser524, Ser553, and Ser590 each carry the phosphoserine modification. Asymmetric dimethylarginine is present on Arg594. Ser601 carries the post-translational modification Phosphoserine. The segment covering 643 to 652 has biased composition (gly residues); that stretch reads IPGPGPGGGQ. Disordered regions lie at residues 643–734, 805–891, and 1103–1175; these read IPGP…LASS, PKAG…SSIP, and GHAD…VSEQ. 2 stretches are compositionally biased toward polar residues: residues 719-734 and 830-839; these read AQLQ…LASS and MTSSPVTTAS. The span at 849–870 shows a compositional bias: low complexity; it reads SGTATSTGSAPSSSTLPAASSL. Polar residues predominate over residues 871-891; it reads KTPGTSANMNGPISRTSSSIP. Over residues 1119–1131 the composition is skewed to acidic residues; that stretch reads DESDEDRVGDEQE. Ser1121 and Ser1254 each carry phosphoserine. Residues 1332 to 1369 form a PHD-type; atypical zinc finger; the sequence is PSKCYCRLKAMIMCKGCGAFCHDDCIGPSKLCVSCLVV.

The protein belongs to the Asx family. As to quaternary structure, core component of the polycomb repressive deubiquitinase (PR-DUB) complex, at least composed of BAP1, one of ASXL1, ASXL2 or (probably) ASXL3, and one of MBD5 or MBD6. Distinct combinations of ASXL and MBD proteins may preferentially bind specific histone modification marks. The PR-DUB core associates with a number of accessory proteins, including FOXK1, FOXK2, KDM1B, HCFC1 and OGT; KDM1B specifically associates with ASXL2 PR-DUB complexes. Interacts (via PHD domain) with MBD5 and MBD6 (via MBD domain); the interaction is probably direct and mediates association of MBD proteins with the PR-DUB core. Interacts with PPARA and PPARG.

It localises to the nucleus. Functionally, putative Polycomb group (PcG) protein. PcG proteins act by forming multiprotein complexes, which are required to maintain the transcriptionally repressive state of homeotic genes throughout development. PcG proteins are not required to initiate repression, but to maintain it during later stages of development. They probably act via methylation of histones, rendering chromatin heritably changed in its expressibility. Involved in transcriptional regulation mediated by ligand-bound nuclear hormone receptors, such as peroxisome proliferator-activated receptor gamma (PPARG). Acts as a coactivator for PPARG and enhances its adipocyte differentiation-inducing activity; the function seems to involve differential recruitment of acetylated and methylated histone H3. Non-catalytic component of the PR-DUB complex, a complex that specifically mediates deubiquitination of histone H2A monoubiquitinated at 'Lys-119' (H2AK119ub1). The PR-DUB complex is an epigenetic regulator of gene expression and acts as a transcriptional coactivator, affecting genes involved in development, cell communication, signaling, cell proliferation and cell viability. ASXL1, ASXL2 and ASXL3 function redundantly in the PR-DUB complex. The ASXL proteins are essential for chromatin recruitment and transcriptional activation of associated genes. ASXL1 and ASXL2 are important for BAP1 protein stability. The protein is Putative Polycomb group protein ASXL2 (Asxl2) of Mus musculus (Mouse).